Here is a 285-residue protein sequence, read N- to C-terminus: V-type proton ATPase subunit D (285 aa).

Residues 208–226 show a composition bias toward basic and acidic residues; it reads QKTKENAEKADSVTKEEHQ. The interval 208-285 is disordered; the sequence is QKTKENAEKA…ENDSDEEVIF (78 aa). Serine 219 carries the post-translational modification Phosphoserine. A compositionally biased stretch (polar residues) spans 227–236; it reads GGSNTLQQTK. A compositionally biased stretch (basic and acidic residues) spans 248-263; the sequence is VGKEVINEVENSKDDT. The segment covering 271–285 has biased composition (acidic residues); the sequence is TDDEEENDSDEEVIF.

It belongs to the V-ATPase D subunit family. V-ATPase is a heteromultimeric enzyme composed of a peripheral catalytic V1 complex (components A to H) attached to an integral membrane V0 proton pore complex (components: a, c, c', c'', d, e, f and VOA1).

Its subcellular location is the vacuole membrane. Its function is as follows. Subunit of the V1 complex of vacuolar(H+)-ATPase (V-ATPase), a multisubunit enzyme composed of a peripheral complex (V1) that hydrolyzes ATP and a membrane integral complex (V0) that translocates protons. V-ATPase is responsible for acidifying and maintaining the pH of intracellular compartments. The protein is V-type proton ATPase subunit D (vma8) of Schizosaccharomyces pombe (strain 972 / ATCC 24843) (Fission yeast).